The following is a 551-amino-acid chain: Colicin E3 (551 aa).

Disordered stretches follow at residues 1-74 (MSGG…SGGG), 243-269 (TLSP…NTRD), and 293-320 (PDQV…EAAE). The segment at 1-315 (MSGGDGRGHN…RQQEWDATHP (315 aa)) is translocation (T) domain. Positions 20–35 (INGGPTGLGVGGGASD) are enriched in gly residues. Positions 35-39 (DGSGW) match the Binds to TolB motif. The segment covering 36–45 (GSGWSSENNP) has biased composition (low complexity). Residues 46–74 (WGGGSGSGIHWGGGSGHGNGGGNGNSGGG) are compositionally biased toward gly residues. The span at 296–320 (VKQRQDEENRRQQEWDATHPVEAAE) shows a compositional bias: basic and acidic residues. The stretch at 316–378 (VEAAERNYER…IAEIKQFNRF (63 aa)) forms a coiled coil. A receptor-binding (R) domain region spans residues 316-450 (VEAAERNYER…SAENNLNDEK (135 aa)). The Hairpin motif lies at 379-385 (AHDPMAG). The stretch at 386–450 (GHRMWQMAGL…SAENNLNDEK (65 aa)) forms a coiled coil. A disordered region spans residues 406-505 (NKQAAFDAAA…KRWTGDKGRK (100 aa)). Basic and acidic residues predominate over residues 430-472 (ESRKKKEDKKRSAENNLNDEKNKPRKGFKDYGHDYHPAPKTEN). The linker stretch occupies residues 451–456 (NKPRKG). The ribosome inactivating activity stretch occupies residues 455-551 (KGFKDYGHDY…DPKRNIKKYL (97 aa)). The interval 457–551 (FKDYGHDYHP…DPKRNIKKYL (95 aa)) is cytotoxic RNase (C) domain. Residue histidine 513 is the Proton donor of the active site. Catalysis depends on glutamate 517, which acts as the Proton acceptor. A disordered region spans residues 517–551 (EGYRASDGQHLGSFDPKTGNQLKGPDPKRNIKKYL). Residues 530 to 551 (FDPKTGNQLKGPDPKRNIKKYL) form a binding of immunity protein region. Arginine 545 is an active-site residue.

The protein belongs to the cloacin colicin family. As to quaternary structure, native colicin E3 is a 1:1 complex of A chain and protein B (cognate immunity protein, Im3); protein A is 1,000-fold more active in inactivating ribosomes than the native complex. The cytotoxic fragment (residues 456-551, C95) forms a 1:1 complex with Im3. The receptor-binding (R) domain binds obliquely to its receptor BtuB without displacing BtuB's central plug; binding unfolds the R domain. The N-terminal 83 residues (T83) bind OmpF; trimeric complexes with colicin E3, BtuB and OmpF can be cross-linked and immunoprecipitated. Probably inserts into the OmpF pore as an unfolded peptide and spans the OmpF pore. In a complex with T.thermophilus 70S ribosomes, cytotoxic fragment C96 contacts 16S rRNA, 23S rRNA, mRNA, P-site tRNA and ribosomal protein uS12.

It is found in the secreted. Functionally, colicins are polypeptide toxins produced by and active against E.coli and closely related bacteria. Cleaves 16S rRNA between adenosine-1492 and guanosine-1493 (E.coli 16S rRNA numbering), releasing a 49 nucleotide (nt) 'colicin' fragment. Inactivates 70S ribosomes or 30S subunits by endonucleolytically cleaving 16S RNA at a specific site about 50 nt from its C-terminus. Produces 5'-OH-guanosine and a 2',3'-cyclic phosphate adenosine. Mixing a susceptible (e.g. strain K12 / A19) and colicin E3 producing strain results in total protein translation inhibition within 11 minutes. Its activity is inhibited by cognate immunity protein Im3. In terms of biological role, uses BtuB, the vitamin B transporter, as a receptor on the outer membrane; binds via the receptor (R) domain. Then the translocation domain (T) probably 'fishes' for its outer membrane translocon protein, OmpF. The N-terminal 83 residues (T83) can bind to and occlude OmpF channels. A complex of the cytotoxic C-terminal 96 residues (C96) plus the immunity protein does not occlude OmpF; upon complex separation from the immunity protein C96 becomes disordered and is able to bind OmpF. The N-terminus probably binds TolB and then reinserts into an empty pore of trimeric OmpF; the rest of the protein is pulled through OmpF and crosses the inner membrane, where the cytotoxic fragment is probably released by protease FtsH. This Escherichia coli protein is Colicin E3 (ceaC).